The chain runs to 494 residues: Cysteine--tRNA ligase (494 aa).

C29 lines the Zn(2+) pocket. The short motif at L31–H41 is the 'HIGH' region element. Residues K187–G220 form a disordered region. Residues A196 to R211 show a composition bias toward basic and acidic residues. C230, H255, and E259 together coordinate Zn(2+). Positions K287 to S291 match the 'KMSKS' region motif.

This sequence belongs to the class-I aminoacyl-tRNA synthetase family. Zn(2+) serves as cofactor.

It is found in the cytoplasm. The catalysed reaction is tRNA(Cys) + L-cysteine + ATP = L-cysteinyl-tRNA(Cys) + AMP + diphosphate. In Halobacterium salinarum (strain ATCC 700922 / JCM 11081 / NRC-1) (Halobacterium halobium), this protein is Cysteine--tRNA ligase.